The following is a 663-amino-acid chain: Protein THEMIS2 (663 aa).

2 CABIT regions span residues 2–237 and 238–515; these read EPVP…TASS and QHIH…EAEG. Positions 545–663 are disordered; sequence ASESQAPPPR…DMDDHDYEEI (119 aa). A compositionally biased stretch (polar residues) spans 559-577; the sequence is QGINKKQQNIQSCKESSVK. A Phosphothreonine modification is found at Thr-596. The span at 621 to 641 shows a compositional bias: polar residues; the sequence is NPQTQNSVLSMKPKTSSSLGK. Acidic residues predominate over residues 653-663; the sequence is PDMDDHDYEEI. Position 660 is a phosphotyrosine (Tyr-660).

Belongs to the themis family. As to quaternary structure, interacts with VAV1. Interacts with LAT. Interacts constitutively with GRB2, LYN and PLCG2; these interactions increase the activation of PLCG2 and its downstream pathways following B cell receptor stimulation. Phosphorylation at Tyr-660 is induced by LPS. Phosphorylated by Src kinases (Lck or Fyn) following BCR engagement. In terms of tissue distribution, expressed in both developing and mature B-cells with high expression in immature, follicular and B1 B cells. Also expressed in macrophages and dendritic cells. Down-regulated in splenocytes of mice developing arthritis in a collagen-induced model, not in those of mice failing to develop the disease. Transiently down-regulated in splenocytes of mice infected with influenza virus.

It localises to the nucleus. Its subcellular location is the cytoplasm. In terms of biological role, may constitute a control point in macrophage inflammatory response, promoting LPS-induced TLR4-mediated TNF production. Determines the threshold for activation of B cells by low-affinity and low-avidity ligands via PLCG2 activation and its downstream pathways. This chain is Protein THEMIS2, found in Mus musculus (Mouse).